The primary structure comprises 349 residues: NADH-ubiquinone oxidoreductase chain 2 (349 aa).

Transmembrane regions (helical) follow at residues Pro-3 to Ser-23, Ala-66 to Ile-86, Val-98 to Val-118, Phe-139 to Leu-159, Ile-178 to Pro-198, Ser-199 to Leu-219, Leu-240 to Phe-260, Gly-274 to Leu-294, and Phe-319 to Leu-339.

It belongs to the complex I subunit 2 family.

Its subcellular location is the mitochondrion inner membrane. It carries out the reaction a ubiquinone + NADH + 5 H(+)(in) = a ubiquinol + NAD(+) + 4 H(+)(out). Its function is as follows. Core subunit of the mitochondrial membrane respiratory chain NADH dehydrogenase (Complex I) that is believed to belong to the minimal assembly required for catalysis. Complex I functions in the transfer of electrons from NADH to the respiratory chain. The immediate electron acceptor for the enzyme is believed to be ubiquinone. The protein is NADH-ubiquinone oxidoreductase chain 2 (MT-ND2) of Oncorhynchus mykiss (Rainbow trout).